We begin with the raw amino-acid sequence, 59 residues long: Large ribosomal subunit protein uL30 (59 aa).

The protein belongs to the universal ribosomal protein uL30 family. As to quaternary structure, part of the 50S ribosomal subunit.

The chain is Large ribosomal subunit protein uL30 from Mycobacterium sp. (strain JLS).